The following is a 263-amino-acid chain: Probable esterase PIR7A (263 aa).

The Acyl-ester intermediate role is filled by Ser82. Active-site charge relay system residues include Asp213 and His241.

This sequence belongs to the AB hydrolase superfamily.

The sequence is that of Probable esterase PIR7A (PIR7A) from Oryza sativa subsp. indica (Rice).